The chain runs to 805 residues: MEPVMSLALAAHGPPSILEPLFKTVTTSTTTTTTTTTSTTTTTASPAGYSPGYPGTTLLTALFENLTSTAASGLYDPYSGMYGNQTNGTIGFETKGPRYSLASMVVMGFVAAILSTVTVAGNVMVMISFKIDKQLQTISNYFLFSLAIADFAIGAISMPLFAVTTILGYWPLGPIVCDTWLALDYLASNASVLNLLIISFDRYFSVTRPLTYRAKRTTNRAAVMIGAAWGISLLLWPPWIYSWPYIEGKRTVPKDECYIQFIETNQYITFGTALAAFYFPVTIMCFLYWRIWRETKKRQKDLPNLQAGKKDSSKRSNSSDENTVVNHASGGLLAFAQVGGNDHDTWRRPRSESSPDAESVYMTNMVIDSGYHGMHSRKSSIKSTNTIKKSYTCFGSIKEWCIAWWHSGREDSDDFAYEQEEPSDLGYATPVTIETPLQSSVSRCTSMNVMRDNYSMGGSVSGVRPPSILLSDVSPTPLPRPPLASISQLQEMSAVTASTTANVNTSGNGNGAINNNNNASHNGNGAVNGNGAGNGSGIGLGTTGNATHRDSRTLPVINRINSRSVSQDSVYTILIRLPSDGASSNAANGGGGGPGAGAAASASLSMQGDCAPSIKMIHEDGPTTTAAAAPLASAAATRRPLPSRDSEFSLPLGRRMSHAQHDARLLNAKVIPKQLGKAGGGAAGGGVGGAHALMNARNAAKKKKKSQEKRQESKAAKTLSAILLSFIITWTPYNILVLIKPLTTCSDCIPTELWDFFYALCYINSTINPMCYALCNATFRRTYVRILTCKWHTRNREGMVRGVYN.

The Extracellular segment spans residues 1–100 (MEPVMSLALA…GFETKGPRYS (100 aa)). The segment covering 27-43 (TSTTTTTTTTTSTTTTT) has biased composition (low complexity). Residues 27-47 (TSTTTTTTTTTSTTTTTASPA) form a disordered region. 3 N-linked (GlcNAc...) asparagine glycosylation sites follow: N65, N84, and N87. A helical transmembrane segment spans residues 101 to 121 (LASMVVMGFVAAILSTVTVAG). At 122 to 141 (NVMVMISFKIDKQLQTISNY) the chain is on the cytoplasmic side. A helical transmembrane segment spans residues 142 to 162 (FLFSLAIADFAIGAISMPLFA). Residues 163 to 177 (VTTILGYWPLGPIVC) are Extracellular-facing. A helical transmembrane segment spans residues 178-198 (DTWLALDYLASNASVLNLLII). The Cytoplasmic segment spans residues 199-220 (SFDRYFSVTRPLTYRAKRTTNR). A helical transmembrane segment spans residues 221 to 241 (AAVMIGAAWGISLLLWPPWIY). The Extracellular segment spans residues 242-266 (SWPYIEGKRTVPKDECYIQFIETNQ). A helical membrane pass occupies residues 267-287 (YITFGTALAAFYFPVTIMCFL). Residues 288–718 (YWRIWRETKK…KRQESKAAKT (431 aa)) are Cytoplasmic-facing. 3 disordered regions span residues 302–322 (LPNL…SDEN), 340–359 (GNDH…DAES), and 507–530 (GNGN…VNGN). Basic and acidic residues-rich tracts occupy residues 308–318 (GKKDSSKRSNS) and 341–353 (NDHD…RSES). Residues 507–525 (GNGNGAINNNNNASHNGNG) show a composition bias toward low complexity. A helical membrane pass occupies residues 719-739 (LSAILLSFIITWTPYNILVLI). The Extracellular segment spans residues 740–752 (KPLTTCSDCIPTE). A helical membrane pass occupies residues 753 to 773 (LWDFFYALCYINSTINPMCYA). Residues 774 to 805 (LCNATFRRTYVRILTCKWHTRNREGMVRGVYN) lie on the Cytoplasmic side of the membrane.

It belongs to the G-protein coupled receptor 1 family. Muscarinic acetylcholine receptor subfamily. In terms of tissue distribution, intense staining in the glomeruli of the antennal lobes, the region of the nervous system containing terminals of antennal olfactory sensory neurons and mechanosensory neurons. Also a discrete group of neurosecretory cells in the pars intercerebralis of the brain.

The protein localises to the cell membrane. It is found in the postsynaptic cell membrane. In terms of biological role, the muscarinic acetylcholine receptor mediates various cellular responses, including inhibition of adenylate cyclase, breakdown of phosphoinositides and modulation of potassium channels through the action of G proteins. Primary transducing effect is Pi turnover. May have a role in the processing of olfactory and mechanosensory signals; regulation of neurosecretion. The protein is Muscarinic acetylcholine receptor DM1 (mAChR-A) of Drosophila melanogaster (Fruit fly).